Here is a 367-residue protein sequence, read N- to C-terminus: Cellular tumor antigen p53 (367 aa).

Positions 1 to 30 (MAEEMEPLLEPTEVFMDLWSMLPYSMQQLP) are transcription activation (acidic). The segment at 30-84 (PLPEDHSNWQELSPLEPSDPPPPPPPPPLPLAAAAPPPLNPPTPPRAAPSPVVPS) is disordered. Pro residues predominate over residues 46–81 (PSDPPPPPPPPPLPLAAAAPPPLNPPTPPRAAPSPV). The DNA-binding element occupies 87 to 278 (DYGGDFDFRV…KIEEENFRKR (192 aa)). Zn(2+)-binding residues include Cys-161, His-164, Cys-224, and Cys-228. The segment at 259–266 (RVCACPGR) is interaction with DNA. Disordered stretches follow at residues 275 to 303 (FRKR…KKRV) and 333 to 367 (LAEG…KGSD). Residues 286–302 (KRAMSPPTEAPEPPKKR) carry the Bipartite nuclear localization signal motif. The tract at residues 308 to 339 (NEIFYLQVRGRRRYEMLKEINEALQLAEGGSA) is oligomerization. Positions 322 to 333 (EMLKEINEALQL) match the Nuclear export signal motif. Residues 347–364 (RVKVEGPQPSCGKKLLQK) form a basic (repression of DNA-binding) region.

It belongs to the p53 family. In terms of assembly, binds DNA as a homotetramer. Zn(2+) is required as a cofactor.

The protein localises to the cytoplasm. It is found in the nucleus. In terms of biological role, multifunctional transcription factor that induces cell cycle arrest, DNA repair or apoptosis upon binding to its target DNA sequence. Acts as a tumor suppressor in many tumor types; induces growth arrest or apoptosis depending on the physiological circumstances and cell type. Negatively regulates cell division by controlling expression of a set of genes required for this process. One of the activated genes is an inhibitor of cyclin-dependent kinases. Apoptosis induction seems to be mediated either by stimulation of BAX and FAS antigen expression, or by repression of Bcl-2 expression. The polypeptide is Cellular tumor antigen p53 (TP53) (Gallus gallus (Chicken)).